The sequence spans 442 residues: Cation channel sperm-associated protein 4 (442 aa).

Residues 1–66 lie on the Cytoplasmic side of the membrane; it reads MSEKHKWWQQ…TQMYIKQLLR (66 aa). The helical transmembrane segment at 67–88 threads the bilayer; the sequence is HPAFQLLLAFLLLSNAITIALR. At 89–98 the chain is on the extracellular side; sequence TNSYLGQKHY. The helical transmembrane segment at 99 to 125 threads the bilayer; it reads ELFSTIDDIVLTILICEVLLGWLNGFW. Residues 126–129 lie on the Cytoplasmic side of the membrane; that stretch reads IFWK. The helical transmembrane segment at 130-153 threads the bilayer; sequence DGWNILNFAIVFILFMGFFIKQLD. At 154–156 the chain is on the extracellular side; that stretch reads MVA. The helical transmembrane segment at 157-175 threads the bilayer; the sequence is ITYPLRVLRLVHVCMAVEP. Residues 176–188 are Cytoplasmic-facing; the sequence is LARIIKVILQSMP. Residues 189-212 traverse the membrane as a helical segment; sequence DLANVMALILFFMLVFSVFGVTLF. At 213–222 the chain is on the extracellular side; the sequence is GAFVPKHFQN. Positions 223 to 234 form an intramembrane region, helical; Pore-forming; it reads MGVALYTLFICI. Topologically, residues 235-255 are extracellular; that stretch reads TQDGWLDIYTDFQMDEREYAM. The chain crosses the membrane as a helical span at residues 256–283; that stretch reads EVGGAIYFAVFITLGAFIGLNLFVVVVT. The Cytoplasmic segment spans residues 284–442; the sequence is TNLEQMMKTG…NMVNKHKFSH (159 aa).

It belongs to the cation channel sperm-associated (TC 1.A.1.19) family. In terms of assembly, component of the CatSper complex or CatSpermasome composed of the core pore-forming members CATSPER1, CATSPER2, CATSPER3 and CATSPER4 as well as auxiliary members CATSPERB, CATSPERG2, CATSPERD, CATSPERE, CATSPERZ, C2CD6/CATSPERT, SLCO6C1, TMEM249, TMEM262 and EFCAB9. HSPA1 may be an additional auxiliary complex member. The core complex members CATSPER1, CATSPER2, CATSPER3 and CATSPER4 form a heterotetrameric channel. The auxiliary CATSPERB, CATSPERG2, CATSPERD and CATSPERE subunits form a pavilion-like structure over the pore which stabilizes the complex through interactions with CATSPER4, CATSPER3, CATSPER1 and CATSPER2 respectively. SLCO6C1 interacts with CATSPERE and TMEM262/CATSPERH interacts with CATSPERB, further stabilizing the complex. C2CD6/CATSPERT interacts at least with CATSPERD and is required for targeting the CatSper complex in the flagellar membrane. As to expression, testis-specific.

The protein localises to the cell projection. It is found in the cilium. It localises to the flagellum membrane. It carries out the reaction Ca(2+)(in) = Ca(2+)(out). Its activity is regulated as follows. In contrast to the human ortholog, not activated by progesterone. Activated by intracellular alkalinization. In terms of biological role, pore-forming subunit of the CatSper complex, a sperm-specific voltage-gated calcium channel that plays a central role in sperm cell hyperactivation. Controls calcium entry to mediate the hyperactivated motility, a step needed for sperm motility which is essential late in the preparation of sperm for fertilization. In Mus musculus (Mouse), this protein is Cation channel sperm-associated protein 4 (Catsper4).